Consider the following 192-residue polypeptide: MEVILLERISKLGQMGETVKVRDGFARNYLLPLGKALRANAANKTRFEAERATLEARNLERKSEAQKVADVLDGKSFIVVRSAGETGQLYGSVAARDVVEILGAEGFNIGRNQVHLNTPIKSIGLHKVELQLHAEVEIHVELNVARSAEEAERQAKGEELTSVDAIYGVDEDALRPEDFFDPEADGVDEDEA.

Residues 173 to 192 (ALRPEDFFDPEADGVDEDEA) form a disordered region. Over residues 179-192 (FFDPEADGVDEDEA) the composition is skewed to acidic residues.

This sequence belongs to the bacterial ribosomal protein bL9 family.

Functionally, binds to the 23S rRNA. This chain is Large ribosomal subunit protein bL9 (rplI), found in Rhizobium leguminosarum bv. trifolii.